Reading from the N-terminus, the 280-residue chain is Succinate dehydrogenase [ubiquinone] iron-sulfur subunit, mitochondrial (280 aa).

The N-terminal 28 residues, Met1–Gly28, are a transit peptide targeting the mitochondrion. In terms of domain architecture, 2Fe-2S ferredoxin-type spans Lys40–Met133. Lys51 and Lys55 each carry N6-acetyllysine. [2Fe-2S] cluster-binding residues include Cys93, Cys98, Cys101, and Cys113. The interval Phe146–Trp218 is interaction with SDHAF1. The 4Fe-4S ferredoxin-type domain occupies Asp176–Tyr206. Residues Cys186, Cys189, and Cys192 each contribute to the [4Fe-4S] cluster site. Cys196 contacts [3Fe-4S] cluster. An a ubiquinone-binding site is contributed by Trp201. Residues Cys243 and Cys249 each contribute to the [3Fe-4S] cluster site. Cys253 serves as a coordination point for [4Fe-4S] cluster.

Belongs to the succinate dehydrogenase/fumarate reductase iron-sulfur protein family. In terms of assembly, component of complex II composed of four subunits: the flavoprotein (FP) SDHA, iron-sulfur protein (IP) SDHB, and a cytochrome b560 composed of SDHC and SDHD. Interacts with SDHAF1; the interaction is required for iron-sulfur cluster incorporation into SDHB. Requires [2Fe-2S] cluster as cofactor. [3Fe-4S] cluster serves as cofactor. It depends on [4Fe-4S] cluster as a cofactor.

Its subcellular location is the mitochondrion inner membrane. The catalysed reaction is a quinone + succinate = fumarate + a quinol. It catalyses the reaction (R)-malate + a quinone = enol-oxaloacetate + a quinol. The enzyme catalyses (S)-malate + a quinone = enol-oxaloacetate + a quinol. The protein operates within carbohydrate metabolism; tricarboxylic acid cycle; fumarate from succinate (eukaryal route): step 1/1. Its activity is regulated as follows. Enol-oxaloacetate inhibits the succinate dehydrogenase activity. Functionally, iron-sulfur protein (IP) subunit of the succinate dehydrogenase complex (mitochondrial respiratory chain complex II), responsible for transferring electrons from succinate to ubiquinone (coenzyme Q). SDH also oxidizes malate to the non-canonical enol form of oxaloacetate, enol-oxaloacetate. Enol-oxaloacetate, which is a potent inhibitor of the succinate dehydrogenase activity, is further isomerized into keto-oxaloacetate. The chain is Succinate dehydrogenase [ubiquinone] iron-sulfur subunit, mitochondrial (SDHB) from Bos taurus (Bovine).